The chain runs to 872 residues: Alanine--tRNA ligase (872 aa).

Residues histidine 567, histidine 571, cysteine 669, and histidine 673 each contribute to the Zn(2+) site.

The protein belongs to the class-II aminoacyl-tRNA synthetase family. Requires Zn(2+) as cofactor.

It localises to the cytoplasm. It catalyses the reaction tRNA(Ala) + L-alanine + ATP = L-alanyl-tRNA(Ala) + AMP + diphosphate. Functionally, catalyzes the attachment of alanine to tRNA(Ala) in a two-step reaction: alanine is first activated by ATP to form Ala-AMP and then transferred to the acceptor end of tRNA(Ala). Also edits incorrectly charged Ser-tRNA(Ala) and Gly-tRNA(Ala) via its editing domain. The protein is Alanine--tRNA ligase of Streptococcus pyogenes serotype M12 (strain MGAS2096).